The chain runs to 725 residues: Polyribonucleotide nucleotidyltransferase (725 aa).

D487 and D493 together coordinate Mg(2+). The region spanning 554–613 is the KH domain; that stretch reads PRIETMQIPTDKIREVIGTGGKVIREIVEKTGAKIDIQDTGVVKIASSDGKAIKAAYNWI. One can recognise an S1 motif domain in the interval 623 to 691; it reads GMIYDGTVVK…ERGKIRLSMK (69 aa). The interval 699-725 is disordered; that stretch reads EDLTEKLKAEREADRNRERQARQSAGE. Residues 701–719 show a composition bias toward basic and acidic residues; sequence LTEKLKAEREADRNRERQA.

Belongs to the polyribonucleotide nucleotidyltransferase family. The cofactor is Mg(2+).

Its subcellular location is the cytoplasm. The catalysed reaction is RNA(n+1) + phosphate = RNA(n) + a ribonucleoside 5'-diphosphate. Involved in mRNA degradation. Catalyzes the phosphorolysis of single-stranded polyribonucleotides processively in the 3'- to 5'-direction. This chain is Polyribonucleotide nucleotidyltransferase, found in Methylobacterium sp. (strain 4-46).